We begin with the raw amino-acid sequence, 440 residues long: Kinetochore protein NUF2 homolog (440 aa).

Coiled coils occupy residues 142 to 239 (LGLL…LRSQ) and 299 to 386 (INEQ…RQTN).

It belongs to the NUF2 family. As to quaternary structure, component of the NDC80 complex, which consists of NDC80, NUF2, SPC24 and SPC25.

It is found in the chromosome. The protein localises to the centromere. Its function is as follows. Acts as a component of the essential kinetochore-associated NDC80 complex, which is required for chromosome segregation and spindle checkpoint activity to ensure proper cell division. The protein is Kinetochore protein NUF2 homolog of Arabidopsis thaliana (Mouse-ear cress).